The primary structure comprises 367 residues: Zinc metalloproteinase nas-22 (367 aa).

A signal peptide spans 1–16 (MKSFFILLSILQECYG). The Peptidase M12A domain occupies 41 to 237 (VLIRGSDEER…LMINKYYECS (197 aa)). 2 N-linked (GlcNAc...) asparagine glycosylation sites follow: Asn56 and Asn85. 4 disulfide bridges follow: Cys88-Cys236, Cys111-Cys130, Cys238-Cys258, and Cys260-Cys269. Zn(2+) is bound at residue His138. The active site involves Glu139. Zn(2+)-binding residues include His142 and His148. N-linked (GlcNAc...) asparagine glycosylation is found at Asn169, Asn241, and Asn254. One can recognise an EGF-like domain in the interval 232–270 (KYYECSCANNLSCKNHGYPNPSNCSQCNCPYGFGGADCS). 2 N-linked (GlcNAc...) asparagine glycosylation sites follow: Asn287 and Asn322.

Zn(2+) is required as a cofactor. As to expression, expressed in uterine seam (utse) cell.

Its subcellular location is the secreted. Its function is as follows. Metalloprotease. The chain is Zinc metalloproteinase nas-22 (nas-22) from Caenorhabditis elegans.